The sequence spans 219 residues: Ribose-5-phosphate isomerase A (219 aa).

Residues Thr28–Thr31, Asp81–Asp84, and Lys94–Gly97 contribute to the substrate site. Catalysis depends on Glu103, which acts as the Proton acceptor. Lys121 serves as a coordination point for substrate.

The protein belongs to the ribose 5-phosphate isomerase family. Homodimer.

It carries out the reaction aldehydo-D-ribose 5-phosphate = D-ribulose 5-phosphate. It participates in carbohydrate degradation; pentose phosphate pathway; D-ribose 5-phosphate from D-ribulose 5-phosphate (non-oxidative stage): step 1/1. In terms of biological role, catalyzes the reversible conversion of ribose-5-phosphate to ribulose 5-phosphate. The polypeptide is Ribose-5-phosphate isomerase A (Shewanella oneidensis (strain ATCC 700550 / JCM 31522 / CIP 106686 / LMG 19005 / NCIMB 14063 / MR-1)).